We begin with the raw amino-acid sequence, 61 residues long: Large ribosomal subunit protein bL32 (61 aa).

It belongs to the bacterial ribosomal protein bL32 family.

The polypeptide is Large ribosomal subunit protein bL32 (Acidithiobacillus ferrooxidans (strain ATCC 23270 / DSM 14882 / CIP 104768 / NCIMB 8455) (Ferrobacillus ferrooxidans (strain ATCC 23270))).